The following is a 915-amino-acid chain: Protein MEI2-like 1 (915 aa).

Residues Met-1–Ser-90 form a disordered region. Basic and acidic residues predominate over residues His-16–Ser-25. Residues Met-50 to Gln-65 are compositionally biased toward polar residues. Residues Ser-66–Pro-77 show a composition bias toward low complexity. Ser-76 bears the Phosphoserine mark. Residues Asn-78–Glu-89 show a composition bias toward polar residues. RRM domains follow at residues Arg-217 to Ser-290 and Gly-302 to Pro-375. 2 disordered regions span residues Pro-690 to Asn-723 and Leu-854 to Asn-915. A compositionally biased stretch (basic and acidic residues) spans Pro-705–Asn-723. Polar residues predominate over residues Arg-882–Ser-898.

As to expression, expressed in roots, shoots, leaves, flowers and siliques.

In terms of biological role, probable RNA-binding transcriptional activator that plays a role in meiosis and vegetative growth. May be a downstream effector of TOR signaling pathway and recruited by RAPTOR1 for TOR substrate. This chain is Protein MEI2-like 1 (ML1), found in Arabidopsis thaliana (Mouse-ear cress).